A 39-amino-acid polypeptide reads, in one-letter code: Alpha-conotoxin ArIA (39 aa).

Positions 1-17 (SDGRNVAAKAFHRIGRT) are excised as a propeptide. 2 cysteine pairs are disulfide-bonded: C22/C28 and C23/C36. The ser-Xaa-Pro motif, crucial for potent interaction with nAChR stretch occupies residues 24 to 26 (SNP). Residue P33 is modified to 4-hydroxyproline; in ArIA.

This sequence belongs to the conotoxin A superfamily. As to expression, expressed by the venom duct.

The protein resides in the secreted. Functionally, alpha-conotoxins act on postsynaptic membranes, they bind to the nicotinic acetylcholine receptors (nAChR) and thus inhibit them. This toxin acts as a competitive inhibitor and is 3-fold more potent on alpha-7/CHRNA7 nAChRs (IC(50)=6 nM) than on alpha-3-beta-2/CHRNA3-CHRNB2 nAChR (IC(50)=18 nM). Acts as a competitive inhibitor and is 33-fold more potent on alpha-7/CHRNA7 nAChRs (IC(50)=1.8 nM) than on alpha-3-beta-2/CHRNA3-CHRNB2 nAChR (IC(50)=60.1 nM). The sequence is that of Alpha-conotoxin ArIA from Conus arenatus (Sand-dusted cone).